The chain runs to 229 residues: Large ribosomal subunit protein uL1 (229 aa).

It belongs to the universal ribosomal protein uL1 family. As to quaternary structure, part of the 50S ribosomal subunit.

Its function is as follows. Binds directly to 23S rRNA. The L1 stalk is quite mobile in the ribosome, and is involved in E site tRNA release. Functionally, protein L1 is also a translational repressor protein, it controls the translation of the L11 operon by binding to its mRNA. This Haemophilus influenzae (strain PittEE) protein is Large ribosomal subunit protein uL1.